A 92-amino-acid chain; its full sequence is MDIKLINIGFGNIVSANRLVAIVSPESAPIKRIIQEARDRGMLIDATYGRRTRAVIITDSDHVILSAVQPETVAHRLSTKDDGTNTVDEVEE.

It belongs to the RemA family.

This is Putative regulatory protein CA_C1717 from Clostridium acetobutylicum (strain ATCC 824 / DSM 792 / JCM 1419 / IAM 19013 / LMG 5710 / NBRC 13948 / NRRL B-527 / VKM B-1787 / 2291 / W).